The following is a 344-amino-acid chain: Calcium homeostasis modulator protein 3 (344 aa).

Over 1-20 (MDKFRMLFQHFQSSSESVMN) the chain is Cytoplasmic. A central pore region spans residues 9 to 36 (QHFQSSSESVMNGICLLLAAVTVKLYSS). Residues 21 to 36 (GICLLLAAVTVKLYSS) form a helical membrane-spanning segment. The Extracellular portion of the chain corresponds to 37-48 (FDFNCPCLVHYN). 2 disulfides stabilise this stretch: cysteine 41-cysteine 126 and cysteine 43-cysteine 157. The chain crosses the membrane as a helical span at residues 49-71 (ALYGLGLLLTPPLALFLCGLLAN). Residues 72-98 (RQSVVMVEEWRRPAGHRRKDPGIIRYM) are Cytoplasmic-facing. The S-palmitoyl cysteine moiety is linked to residue cysteine 99. The helical transmembrane segment at 99 to 124 (CSSVLQRALAAPLVWILLALLDGKCF) threads the bilayer. Over 125–176 (VCAFSSSVDPEKFLDFANMTPSQVQLFLAKVPCKEDELVRDSPARKAVSRYL) the chain is Extracellular. The N-linked (GlcNAc...) asparagine glycan is linked to asparagine 142. A helical transmembrane segment spans residues 177–202 (RCLSQAIGWSVTLLLIIAAFLARCLR). S-palmitoyl cysteine attachment occurs at residues cysteine 200 and cysteine 204. The Cytoplasmic portion of the chain corresponds to 203–344 (PCFDQTVFLQ…GTRLSQHTDV (142 aa)).

The protein belongs to the CALHM family. In terms of assembly, associates with CALHM1 as a pore-forming subunit in a hetero-hexameric channel complex. N-glycosylated. Post-translationally, palmitoylated by ZDHHC3 and ZDHHC15. Palmitoylation positively regulates CALHM1:CALHM3 channel conductance. As to expression, specifically expressed in circumvallate taste bud cells.

Its subcellular location is the basolateral cell membrane. The enzyme catalyses ATP(in) = ATP(out). It carries out the reaction Ca(2+)(in) = Ca(2+)(out). It catalyses the reaction Na(+)(in) = Na(+)(out). The catalysed reaction is K(+)(in) = K(+)(out). The enzyme catalyses chloride(in) = chloride(out). In terms of biological role, pore-forming subunit of gustatory voltage-gated ion channels required for sensory perception of sweet, bitter and umami tastes. With CALHM1 forms a fast-activating voltage-gated ATP-release channel in type II taste bud cells, ATP acting as a neurotransmitter to activate afferent neural gustatory pathways. Acts both as a voltage-gated and calcium-activated ion channel: mediates neuronal excitability in response to membrane depolarization and low extracellular Ca(2+) concentration. Has poor ion selectivity and forms a wide pore (around 14 Angstroms) that mediates permeation of small ions including Ca(2+), Na(+), K(+) and Cl(-), as well as larger ions such as ATP(4-). The protein is Calcium homeostasis modulator protein 3 of Homo sapiens (Human).